A 425-amino-acid polypeptide reads, in one-letter code: AP-3 complex subunit mu (425 aa).

The 249-residue stretch at 175-423 (TNEFFIHVLE…TIIAQNVSFR (249 aa)) folds into the MHD domain.

The protein belongs to the adaptor complexes medium subunit family.

It localises to the cytoplasm. Its subcellular location is the cytoskeleton. The protein localises to the microtubule organizing center. The protein resides in the spindle pole body. It is found in the membrane. It localises to the golgi apparatus. Its subcellular location is the cytoplasmic vesicle membrane. Functionally, part of the AP-3 complex, an adaptor-related complex which is not clathrin-associated. The complex is associated with the Golgi region as well as more peripheral structures. It facilitates the budding of vesicles from the Golgi membrane and may be directly involved in trafficking to the vacuole. The chain is AP-3 complex subunit mu (apm3) from Schizosaccharomyces pombe (strain 972 / ATCC 24843) (Fission yeast).